Here is a 118-residue protein sequence, read N- to C-terminus: UPF0102 protein PC1_0307 (118 aa).

The protein belongs to the UPF0102 family.

In Pectobacterium carotovorum subsp. carotovorum (strain PC1), this protein is UPF0102 protein PC1_0307.